Reading from the N-terminus, the 353-residue chain is tRNA N6-adenosine threonylcarbamoyltransferase (353 aa).

His111 and His115 together coordinate Fe cation. Residues 148–152, Asp181, Gly194, and Asn286 contribute to the substrate site; that span reads LVSGG. Asp314 serves as a coordination point for Fe cation.

It belongs to the KAE1 / TsaD family. Requires Fe(2+) as cofactor.

It is found in the cytoplasm. It catalyses the reaction L-threonylcarbamoyladenylate + adenosine(37) in tRNA = N(6)-L-threonylcarbamoyladenosine(37) in tRNA + AMP + H(+). Required for the formation of a threonylcarbamoyl group on adenosine at position 37 (t(6)A37) in tRNAs that read codons beginning with adenine. Is involved in the transfer of the threonylcarbamoyl moiety of threonylcarbamoyl-AMP (TC-AMP) to the N6 group of A37, together with TsaE and TsaB. TsaD likely plays a direct catalytic role in this reaction. This is tRNA N6-adenosine threonylcarbamoyltransferase from Blochmanniella floridana.